A 215-amino-acid chain; its full sequence is tRNA (guanine-N(7)-)-methyltransferase (215 aa).

Residues D43, E68, N95, and D121 each contribute to the S-adenosyl-L-methionine site. The active site involves D121. The substrate site is built by K125 and D157.

Belongs to the class I-like SAM-binding methyltransferase superfamily. TrmB family.

The catalysed reaction is guanosine(46) in tRNA + S-adenosyl-L-methionine = N(7)-methylguanosine(46) in tRNA + S-adenosyl-L-homocysteine. It functions in the pathway tRNA modification; N(7)-methylguanine-tRNA biosynthesis. In terms of biological role, catalyzes the formation of N(7)-methylguanine at position 46 (m7G46) in tRNA. In Trichormus variabilis (strain ATCC 29413 / PCC 7937) (Anabaena variabilis), this protein is tRNA (guanine-N(7)-)-methyltransferase.